We begin with the raw amino-acid sequence, 421 residues long: Gamma-glutamyl phosphate reductase (421 aa).

The protein belongs to the gamma-glutamyl phosphate reductase family.

It is found in the cytoplasm. It carries out the reaction L-glutamate 5-semialdehyde + phosphate + NADP(+) = L-glutamyl 5-phosphate + NADPH + H(+). The protein operates within amino-acid biosynthesis; L-proline biosynthesis; L-glutamate 5-semialdehyde from L-glutamate: step 2/2. In terms of biological role, catalyzes the NADPH-dependent reduction of L-glutamate 5-phosphate into L-glutamate 5-semialdehyde and phosphate. The product spontaneously undergoes cyclization to form 1-pyrroline-5-carboxylate. This is Gamma-glutamyl phosphate reductase from Dinoroseobacter shibae (strain DSM 16493 / NCIMB 14021 / DFL 12).